The primary structure comprises 811 residues: Phosphoinositide 3-kinase adapter protein 1 (811 aa).

The 139-residue stretch at 8–146 (RGCDILIFYS…AVRKAISEDS (139 aa)) folds into the TIR domain. Positions 10–145 (CDILIFYSPD…AAVRKAISED (136 aa)) are necessary and sufficient to mediate inhibition of NF-kappa-B downstream of activated TLRs; may mediate interaction with MYD88 and TIRAP. Residues 146 to 169 (SGCDSVTDTEPEDERELPFSKQTN) form a disordered region. Positions 182 to 318 (VQPDRIRCGA…NIPASGLHLF (137 aa)) constitute a DBB domain. Phosphotyrosine is present on Y264. 3 positions are modified to phosphotyrosine; by SYK: Y420, Y445, and Y460. Y513 carries the phosphotyrosine; by ABL1 modification. Positions 525-551 (DLANRPPVPVPRPEASAPGPPPPPDNE) are disordered. A compositionally biased stretch (pro residues) spans 530 to 550 (PPVPVPRPEASAPGPPPPPDN). A phosphotyrosine; by ABL1 mark is found at Y553, Y570, and Y594. Position 642 is a phosphoserine (S642). Residue Y694 is modified to Phosphotyrosine; by ABL1. The interval 702 to 811 (VLPARTELRR…PPPPVPPRGR (110 aa)) is disordered. Positions 707–716 (TELRRGDWKT) are enriched in basic and acidic residues. The span at 717–740 (DSMSSTASSTSNRSSTRSLLSVSS) shows a compositional bias: low complexity. Position 718 is a phosphoserine (S718). The segment covering 801-811 (HPPPPVPPRGR) has biased composition (pro residues).

Homooligomer. Interacts (phosphorylated on tyrosine residues within YXXM motifs) with PIK3R1 (via SH2 domain); required for BCR- and TLR-mediated activation of phosphoinositide 3-kinase. Interacts (via polyproline C-terminal region) with ABI1 (via SH3 domain); the interaction promotes phosphorylation of PIK3AP1 by ABL1. May interact with MYD88 and TIRAP. In terms of processing, constitutively phosphorylated. Phosphorylated on tyrosine residues in C-terminal region by ABL1. Phosphorylated on tyrosine residues within the YXXM motifs by BTK and SYK. Isoform 1 and isoform 2 are phosphorylated on tyrosine residues, most likely within the YXXM motifs, via CD19 activation. Toll-like receptor activation induces appearance of a phosphorylated form associated with membranes. Predominantly expressed in spleen (at protein level). Expressed at lower levels in thymus, liver and lung. Expressed in B-cells, macrophages and natural killer (NK) cells.

It is found in the cytoplasm. The protein resides in the cell membrane. Its function is as follows. Signaling adapter that contributes to B-cell development by linking B-cell receptor (BCR) signaling to the phosphoinositide 3-kinase (PI3K)-Akt signaling pathway. Has a complementary role to the BCR coreceptor CD19, coupling BCR and PI3K activation by providing a docking site for the PI3K subunit PIK3R1. Alternatively, links Toll-like receptor (TLR) signaling to PI3K activation, a process preventing excessive inflammatory cytokine production. Also involved in the activation of PI3K in natural killer cells. May be involved in the survival of mature B-cells via activation of REL. The sequence is that of Phosphoinositide 3-kinase adapter protein 1 (Pik3ap1) from Mus musculus (Mouse).